Here is a 308-residue protein sequence, read N- to C-terminus: tRNA dimethylallyltransferase (308 aa).

ATP is bound at residue 9 to 16 (GPTAVGKT). Residue 11–16 (TAVGKT) participates in substrate binding. An interaction with substrate tRNA region spans residues 34–37 (DSMQ).

The protein belongs to the IPP transferase family. In terms of assembly, monomer. Requires Mg(2+) as cofactor.

It catalyses the reaction adenosine(37) in tRNA + dimethylallyl diphosphate = N(6)-dimethylallyladenosine(37) in tRNA + diphosphate. In terms of biological role, catalyzes the transfer of a dimethylallyl group onto the adenine at position 37 in tRNAs that read codons beginning with uridine, leading to the formation of N6-(dimethylallyl)adenosine (i(6)A). The chain is tRNA dimethylallyltransferase from Lactobacillus delbrueckii subsp. bulgaricus (strain ATCC 11842 / DSM 20081 / BCRC 10696 / JCM 1002 / NBRC 13953 / NCIMB 11778 / NCTC 12712 / WDCM 00102 / Lb 14).